The following is a 515-amino-acid chain: 1-pyrroline-5-carboxylate dehydrogenase (515 aa).

Active-site residues include Glu-286 and Cys-320.

This sequence belongs to the aldehyde dehydrogenase family. RocA subfamily.

The catalysed reaction is L-glutamate 5-semialdehyde + NAD(+) + H2O = L-glutamate + NADH + 2 H(+). Its pathway is amino-acid degradation; L-proline degradation into L-glutamate; L-glutamate from L-proline: step 2/2. This is 1-pyrroline-5-carboxylate dehydrogenase from Bacillus anthracis (strain A0248).